Consider the following 90-residue polypeptide: Small ribosomal subunit protein bS20 (90 aa).

Over residues 1–11 (MAHHKSAKKRI) the composition is skewed to basic residues. Residues 1–22 (MAHHKSAKKRIRQTERRTEVNR) are disordered. The span at 12-22 (RQTERRTEVNR) shows a compositional bias: basic and acidic residues.

This sequence belongs to the bacterial ribosomal protein bS20 family.

Binds directly to 16S ribosomal RNA. The polypeptide is Small ribosomal subunit protein bS20 (Paramagnetospirillum magneticum (strain ATCC 700264 / AMB-1) (Magnetospirillum magneticum)).